Here is a 335-residue protein sequence, read N- to C-terminus: MLNEAIKEVLSGKDLSESQSEQVMENIMNGQESSALIAGFLIALKMKGESIPEITGCAKAMRNMAVPVKLKSQYAIDTCGTGGDGGRTFNISTAAAIIAASAGVKVAKHGNRAVSSQSGSADVLKELGININLEKSKVEHCIDNVGMGFLFAPSYHSAMKNVAGIRRDLGVRTIFNILGPLTNPAFVKGQVMGVYDRKLLEPAAKTLLNLGCERAMVVHGGDGLDEITTTTVTYVCEVKDGEIRKYTLSPGDFGIKTTFYKNIAGGTARENAAIIMDILKGKTGPERDIVVLNSAAAIYIGKKAEDLKEGILRANELIDSGKAYAKYEEILNYNN.

Residues G80, 83 to 84 (GD), T88, 90 to 93 (NIST), 108 to 116 (KHGNRAVSS), and S120 contribute to the 5-phospho-alpha-D-ribose 1-diphosphate site. G80 serves as a coordination point for anthranilate. Position 92 (S92) interacts with Mg(2+). Residue N111 participates in anthranilate binding. Residue R166 coordinates anthranilate. D225 and E226 together coordinate Mg(2+).

It belongs to the anthranilate phosphoribosyltransferase family. In terms of assembly, homodimer. Mg(2+) is required as a cofactor.

The catalysed reaction is N-(5-phospho-beta-D-ribosyl)anthranilate + diphosphate = 5-phospho-alpha-D-ribose 1-diphosphate + anthranilate. Its pathway is amino-acid biosynthesis; L-tryptophan biosynthesis; L-tryptophan from chorismate: step 2/5. Its function is as follows. Catalyzes the transfer of the phosphoribosyl group of 5-phosphorylribose-1-pyrophosphate (PRPP) to anthranilate to yield N-(5'-phosphoribosyl)-anthranilate (PRA). This chain is Anthranilate phosphoribosyltransferase, found in Clostridium kluyveri (strain NBRC 12016).